The primary structure comprises 674 residues: uncharacterized protein (674 aa).

Residues 1 to 24 (MKTLKALKIFIIVYISSVSLESFA) form the signal peptide. A run of 2 helical transmembrane segments spans residues 226 to 246 (IIGA…ALNK) and 254 to 274 (ITLF…LEPL). The interval 363-384 (GNGPGGNNKPIPNFDPDSKKDR) is disordered. 4 consecutive transmembrane segments (helical) span residues 409–429 (IIIL…LLYF), 436–456 (CMIT…MVLF), 469–489 (VCIS…LLIT), and 562–582 (VVSI…FYYF). The tract at residues 624–674 (SSVHAQGKSPVEDKPDIGSKRKDGVQQGEDSENSSGGELADLASGSGGGKL) is disordered. Residues 633–647 (PVEDKPDIGSKRKDG) are compositionally biased toward basic and acidic residues.

This sequence belongs to the TrbL/VirB6 family.

The protein localises to the cell membrane. This is an uncharacterized protein from Rickettsia typhi (strain ATCC VR-144 / Wilmington).